Here is a 76-residue protein sequence, read N- to C-terminus: UPF0346 protein OEOE_1017 (76 aa).

Belongs to the UPF0346 family.

The polypeptide is UPF0346 protein OEOE_1017 (Oenococcus oeni (strain ATCC BAA-331 / PSU-1)).